We begin with the raw amino-acid sequence, 276 residues long: Formamidopyrimidine-DNA glycosylase (276 aa).

P2 serves as the catalytic Schiff-base intermediate with DNA. The active-site Proton donor is E3. The Proton donor; for beta-elimination activity role is filled by K58. The DNA site is built by H92, R111, and K154. The FPG-type zinc finger occupies 239–273 (QVYGHAGEECNNCGTILEKIKVNGRGTTFCPHCQV). R263 functions as the Proton donor; for delta-elimination activity in the catalytic mechanism.

The protein belongs to the FPG family. In terms of assembly, monomer. The cofactor is Zn(2+).

The enzyme catalyses Hydrolysis of DNA containing ring-opened 7-methylguanine residues, releasing 2,6-diamino-4-hydroxy-5-(N-methyl)formamidopyrimidine.. It carries out the reaction 2'-deoxyribonucleotide-(2'-deoxyribose 5'-phosphate)-2'-deoxyribonucleotide-DNA = a 3'-end 2'-deoxyribonucleotide-(2,3-dehydro-2,3-deoxyribose 5'-phosphate)-DNA + a 5'-end 5'-phospho-2'-deoxyribonucleoside-DNA + H(+). Involved in base excision repair of DNA damaged by oxidation or by mutagenic agents. Acts as a DNA glycosylase that recognizes and removes damaged bases. Has a preference for oxidized purines, such as 7,8-dihydro-8-oxoguanine (8-oxoG). Has AP (apurinic/apyrimidinic) lyase activity and introduces nicks in the DNA strand. Cleaves the DNA backbone by beta-delta elimination to generate a single-strand break at the site of the removed base with both 3'- and 5'-phosphates. This Lactobacillus johnsonii (strain CNCM I-12250 / La1 / NCC 533) protein is Formamidopyrimidine-DNA glycosylase.